The primary structure comprises 141 residues: Lutropin subunit beta (141 aa).

The first 20 residues, 1 to 20 (MEMLQGLLLWLLLSVGGVWA), serve as a signal peptide directing secretion. 6 disulfide bridges follow: Cys29-Cys77, Cys43-Cys92, Cys46-Cys130, Cys54-Cys108, Cys58-Cys110, and Cys113-Cys120. An N-linked (GlcNAc...) asparagine glycan is attached at Asn33.

Belongs to the glycoprotein hormones subunit beta family. In terms of assembly, heterodimer of a common alpha chain and a unique beta chain which confers biological specificity to thyrotropin, lutropin, follitropin and gonadotropin.

The protein resides in the secreted. Functionally, promotes spermatogenesis and ovulation by stimulating the testes and ovaries to synthesize steroids. The sequence is that of Lutropin subunit beta (LHB1) from Ceratotherium simum (White rhinoceros).